The chain runs to 228 residues: DNA mismatch repair protein MutH (228 aa).

It belongs to the MutH family.

The protein localises to the cytoplasm. Functionally, sequence-specific endonuclease that cleaves unmethylated GATC sequences. It is involved in DNA mismatch repair. This chain is DNA mismatch repair protein MutH, found in Yersinia pseudotuberculosis serotype O:1b (strain IP 31758).